A 391-amino-acid polypeptide reads, in one-letter code: Histamine H4 receptor (391 aa).

Residues 1 to 19 (MSESNGTDVLPLTAQVPLA) are Extracellular-facing. A glycan (N-linked (GlcNAc...) asparagine) is linked at asparagine 5. Residues 20–40 (FLMSLLAFAITIGNAVVILAF) form a helical membrane-spanning segment. Residues 41-52 (VADRNLRHRSNY) are Cytoplasmic-facing. The chain crosses the membrane as a helical span at residues 53–73 (FFLNLAISDFFVGVISIPLYI). Over 74–87 (PHTLFNWNFGSGIC) the chain is Extracellular. Cysteine 87 and cysteine 166 form a disulfide bridge. The chain crosses the membrane as a helical span at residues 88–108 (MFWLITDYLLCTASVYSIVLI). At 109 to 131 (SYDRYQSVSNAVRYRAQHTGILK) the chain is on the cytoplasmic side. Residues 132-152 (IVAQMVAVWILAFLVNGPMIL) form a helical membrane-spanning segment. Residues 153-174 (ASDSWKNSTNTEECEPGFVTEW) lie on the Extracellular side of the membrane. Asparagine 159 is a glycosylation site (N-linked (GlcNAc...) asparagine). Residues 175–195 (YILAITAFLEFLLPVSLVVYF) form a helical membrane-spanning segment. At 196 to 306 (SVQIYWSLWK…LLRGRKLARS (111 aa)) the chain is on the cytoplasmic side. The helical transmembrane segment at 307-327 (LAVLLSAFAICWAPYCLFTIV) threads the bilayer. Residues 328–343 (LSTYRRGERPKSIWYS) are Extracellular-facing. Residues 344–364 (IAFWLQWFNSLINPFLYPLCH) traverse the membrane as a helical segment. Residues 365-391 (RRFQKAFWKILCVTKQPAPSQTQSVSS) lie on the Cytoplasmic side of the membrane.

The protein belongs to the G-protein coupled receptor 1 family. Interacts with TSPAN4.

The protein resides in the cell membrane. Functionally, the H4 subclass of histamine receptors could mediate the histamine signals in peripheral tissues. Displays a significant level of constitutive activity (spontaneous activity in the absence of agonist). The sequence is that of Histamine H4 receptor (Hrh4) from Rattus norvegicus (Rat).